Reading from the N-terminus, the 472-residue chain is MNASVPPSAAEYGGDEVSAIVLDPGFSTTRAGFAGEDTPKSLVPTYYGKYSFEGQEKLIFGDDVFVTPRPSLSVGNPMGRDGVVEDWDMAEKLWEYSFTSRLTGAKPSNPLHNGLNDLVEGELPTEMEGVETNEKPLADSPLLMSECSWNPTKAREKTIEIAMEKWGTPAFYLARNGVLASFAAGKASALVVDIGASNISVTPVHDGMVLKRGVQHSPLGGDYISSQIRALFKTNTPQPITITPHYLISSKTAVEAGQPPQAKYKTFPPEKAPDASYRSLLEERTLTEFKECVVQVWPGPTKLSAPGPNGVPNEEMARSTPGRPFEFPDGYNQVFGVDRYRVVESLFDAKATILDPDSQFPAPTPAQTIPELIKAALNGVDVDLRPHLLANVVVTGASSLLYGFTDRLNQELMQLYPGPRVRISAPGNTSERRFSSWIGGSILASLGTFHQMWISKKEFDEHGPNIVEKRCK.

The protein belongs to the actin family. ARP4 subfamily. Component of the NuA4 histone acetyltransferase complex, of the INO80 chromatin remodeling complex, and of the SWR1 chromatin remodeling complex.

The protein resides in the nucleus. Its function is as follows. Chromatin interaction component of the NuA4 histone acetyltransferase complex which is involved in transcriptional activation of selected genes principally by acetylation of nucleosomal histone H4 and H2A. The NuA4 complex is also involved in DNA repair. Is required for NuA4 complex integrity. Component of the SWR1 complex which mediates the ATP-dependent exchange of histone H2A for the H2A variant HZT1 leading to transcriptional regulation of selected genes by chromatin remodeling. Component of the INO80 complex which remodels chromatin by shifting nucleosomes and is involved in DNA repair. The sequence is that of Actin-related protein 4 (arp4) from Emericella nidulans (strain FGSC A4 / ATCC 38163 / CBS 112.46 / NRRL 194 / M139) (Aspergillus nidulans).